Here is a 62-residue protein sequence, read N- to C-terminus: U-stichotoxin-Hau1a (62 aa).

An N-terminal signal peptide occupies residues 1–21 (MKPAIFLMLFVAMFLISEGEG). Positions 22-31 (FKPKDAPQER) are excised as a propeptide. Residue P36 is modified to Hydroxyproline. 2 disulfides stabilise this stretch: C41/C53 and C44/C59.

The protein belongs to the Hau1a/HC18/HC19 family.

It localises to the secreted. The protein resides in the nematocyst. Its function is as follows. Toxin that is lethal to crab. Does not produce the typical symptoms associated with sodium channel toxins in crabs, suggesting that it likely does not act on sodium channels. The polypeptide is U-stichotoxin-Hau1a (Heteractis aurora (Banded sea anemone)).